Consider the following 376-residue polypeptide: Fructose-1,6-bisphosphate aldolase/phosphatase (376 aa).

Residue Asp-11 is the Proton acceptor; for FBP phosphatase activity of the active site. Mg(2+)-binding residues include Asp-11, His-18, Asp-49, and Asp-50. His-18 is a binding site for beta-D-fructose 1,6-bisphosphate. Residue His-18 coordinates dihydroxyacetone phosphate. Tyr-87 lines the beta-D-fructose 1,6-bisphosphate pocket. Gln-91 provides a ligand contact to Mg(2+). 100-101 provides a ligand contact to beta-D-fructose 1,6-bisphosphate; the sequence is GN. Mg(2+) is bound at residue Asp-128. Beta-D-fructose 1,6-bisphosphate is bound at residue Lys-129. Position 129 (Lys-129) interacts with dihydroxyacetone phosphate. The active-site Proton donor/acceptor; for FBP aldolase activity is Tyr-224. Residues Lys-227, Asp-228, and Asp-229 each coordinate Mg(2+). Lys-227 acts as the Schiff-base intermediate with DHAP; for FBP aldolase activity in catalysis. Residues 237 to 238, Arg-261, and Tyr-342 contribute to the beta-D-fructose 1,6-bisphosphate site; that span reads QK. Arg-261 provides a ligand contact to dihydroxyacetone phosphate. The tract at residues 357–376 is disordered; the sequence is MVPLKDSGPAGTGRAYEDPD.

This sequence belongs to the FBP aldolase/phosphatase family. In terms of assembly, homooctamer; dimer of tetramers. Mg(2+) is required as a cofactor.

The catalysed reaction is beta-D-fructose 1,6-bisphosphate + H2O = beta-D-fructose 6-phosphate + phosphate. It catalyses the reaction beta-D-fructose 1,6-bisphosphate = D-glyceraldehyde 3-phosphate + dihydroxyacetone phosphate. Its pathway is carbohydrate biosynthesis; gluconeogenesis. Its function is as follows. Catalyzes two subsequent steps in gluconeogenesis: the aldol condensation of dihydroxyacetone phosphate (DHAP) and glyceraldehyde-3-phosphate (GA3P) to fructose-1,6-bisphosphate (FBP), and the dephosphorylation of FBP to fructose-6-phosphate (F6P). The chain is Fructose-1,6-bisphosphate aldolase/phosphatase from Cenarchaeum symbiosum (strain A).